A 329-amino-acid polypeptide reads, in one-letter code: Galactosylgalactosylxylosylprotein 3-beta-glucuronosyltransferase 2 (329 aa).

Topologically, residues 1 to 2 (MK) are cytoplasmic. The helical; Signal-anchor for type II membrane protein transmembrane segment at 3 to 23 (SALFSRFFILLPWILIVIIML) threads the bilayer. At 24–329 (DVDTRRPAPP…YRLDTVKIEV (306 aa)) the chain is on the lumenal side. Positions 45 to 87 (VGRGGARLPPRRGGPDSGPGRGWEKRNESRPHARPRPEPPLPT) are disordered. The span at 66-81 (GWEKRNESRPHARPRP) shows a compositional bias: basic and acidic residues. N-linked (GlcNAc...) asparagine glycosylation occurs at asparagine 71. UDP-alpha-D-glucuronate contacts are provided by residues 93 to 95 (PTY), aspartate 124, arginine 161, arginine 166, and 191 to 193 (DDD). Aspartate 193 is a binding site for Mn(2+). The interaction with galactose moiety of substrate glycoprotein stretch occupies residues 240 to 249 (WRADRPFAID). Glutamate 279 functions as the Proton donor/acceptor in the catalytic mechanism. Asparagine 298 carries N-linked (GlcNAc...) asparagine glycosylation. Residue 306 to 308 (HTR) coordinates UDP-alpha-D-glucuronate.

This sequence belongs to the glycosyltransferase 43 family. In terms of assembly, homodimer. It depends on Mn(2+) as a cofactor.

It is found in the golgi apparatus membrane. The catalysed reaction is 3-O-(beta-D-galactosyl-(1-&gt;3)-beta-D-galactosyl-(1-&gt;4)-beta-D-xylosyl)-L-seryl-[protein] + UDP-alpha-D-glucuronate = 3-O-(beta-D-GlcA-(1-&gt;3)-beta-D-Gal-(1-&gt;3)-beta-D-Gal-(1-&gt;4)-beta-D-Xyl)-L-seryl-[protein] + UDP + H(+). The protein operates within protein modification; protein glycosylation. In terms of biological role, involved in the biosynthesis of L2/HNK-1 carbohydrate epitope on both glycolipids and glycoproteins. The protein is Galactosylgalactosylxylosylprotein 3-beta-glucuronosyltransferase 2 (B3GAT2) of Canis lupus familiaris (Dog).